Consider the following 137-residue polypeptide: Small ribosomal subunit protein uS12 (137 aa).

A 3-methylthioaspartic acid modification is found at aspartate 89. The disordered stretch occupies residues 105–137; that stretch reads AGVAGRTQRRSKYGAKRPKAGQAAAPAKGKGKK. Positions 111–123 are enriched in basic residues; sequence TQRRSKYGAKRPK. Low complexity predominate over residues 124 to 137; sequence AGQAAAPAKGKGKK.

The protein belongs to the universal ribosomal protein uS12 family. Part of the 30S ribosomal subunit. Contacts proteins S8 and S17. May interact with IF1 in the 30S initiation complex.

Functionally, with S4 and S5 plays an important role in translational accuracy. In terms of biological role, interacts with and stabilizes bases of the 16S rRNA that are involved in tRNA selection in the A site and with the mRNA backbone. Located at the interface of the 30S and 50S subunits, it traverses the body of the 30S subunit contacting proteins on the other side and probably holding the rRNA structure together. The combined cluster of proteins S8, S12 and S17 appears to hold together the shoulder and platform of the 30S subunit. In Phocaeicola vulgatus (strain ATCC 8482 / DSM 1447 / JCM 5826 / CCUG 4940 / NBRC 14291 / NCTC 11154) (Bacteroides vulgatus), this protein is Small ribosomal subunit protein uS12.